Here is a 308-residue protein sequence, read N- to C-terminus: Cytochrome b (308 aa).

Helical transmembrane passes span 1-21 (FGLL…LLAA), 45-66 (WLIR…YLHI), 81-101 (WNIG…GYVL), and 146-166 (FFAL…VHLT). Residues H51 and H65 each coordinate heme b. Heme b is bound by residues H150 and H164. H169 contributes to the a ubiquinone binding site. The next 3 membrane-spanning stretches (helical) occupy residues 194–214 (TKDM…ALFS), 256–276 (LGGV…PLLH), and 288–308 (LSQI…WVGS).

The protein belongs to the cytochrome b family. As to quaternary structure, the cytochrome bc1 complex contains 11 subunits: 3 respiratory subunits (MT-CYB, CYC1 and UQCRFS1), 2 core proteins (UQCRC1 and UQCRC2) and 6 low-molecular weight proteins (UQCRH/QCR6, UQCRB/QCR7, UQCRQ/QCR8, UQCR10/QCR9, UQCR11/QCR10 and a cleavage product of UQCRFS1). This cytochrome bc1 complex then forms a dimer. Heme b is required as a cofactor.

The protein resides in the mitochondrion inner membrane. In terms of biological role, component of the ubiquinol-cytochrome c reductase complex (complex III or cytochrome b-c1 complex) that is part of the mitochondrial respiratory chain. The b-c1 complex mediates electron transfer from ubiquinol to cytochrome c. Contributes to the generation of a proton gradient across the mitochondrial membrane that is then used for ATP synthesis. In Pomatostomus temporalis (Grey-crowned babbler), this protein is Cytochrome b (MT-CYB).